A 109-amino-acid polypeptide reads, in one-letter code: Large ribosomal subunit protein uL24 (109 aa).

It belongs to the universal ribosomal protein uL24 family. In terms of assembly, part of the 50S ribosomal subunit.

In terms of biological role, one of two assembly initiator proteins, it binds directly to the 5'-end of the 23S rRNA, where it nucleates assembly of the 50S subunit. One of the proteins that surrounds the polypeptide exit tunnel on the outside of the subunit. This Rickettsia bellii (strain RML369-C) protein is Large ribosomal subunit protein uL24.